The following is a 38-amino-acid chain: Large ribosomal subunit protein bL36 (38 aa).

It belongs to the bacterial ribosomal protein bL36 family.

The chain is Large ribosomal subunit protein bL36 from Polynucleobacter necessarius subsp. necessarius (strain STIR1).